Consider the following 417-residue polypeptide: Dihydrolipoyllysine-residue succinyltransferase component of 2-oxoglutarate dehydrogenase complex (417 aa).

Positions 1-76 (MAEIKVPELA…QVGEIIGTIS (76 aa)) constitute a Lipoyl-binding domain. An N6-lipoyllysine modification is found at K42. The interval 75-191 (ISEGAGESSA…SFDKPVEVQK (117 aa)) is disordered. Composition is skewed to basic and acidic residues over residues 89–103 (EKTE…EKQA) and 152–163 (RKQDVEAYEKPA). The region spanning 123-160 (IASPSARKLAREKGIDLSQVPTGDPLGRVRKQDVEAYE) is the Peripheral subunit-binding (PSBD) domain. Over residues 164–182 (SKPAPQQKQQPQAQKAQQS) the composition is skewed to low complexity. Active-site residues include H388 and D392.

This sequence belongs to the 2-oxoacid dehydrogenase family. In terms of assembly, forms a 24-polypeptide structural core with octahedral symmetry. Part of the 2-oxoglutarate dehydrogenase (OGDH) complex composed of E1 (2-oxoglutarate dehydrogenase), E2 (dihydrolipoamide succinyltransferase) and E3 (dihydrolipoamide dehydrogenase); the complex contains multiple copies of the three enzymatic components (E1, E2 and E3). Requires (R)-lipoate as cofactor.

It catalyses the reaction N(6)-[(R)-dihydrolipoyl]-L-lysyl-[protein] + succinyl-CoA = N(6)-[(R)-S(8)-succinyldihydrolipoyl]-L-lysyl-[protein] + CoA. Its pathway is amino-acid degradation; L-lysine degradation via saccharopine pathway; glutaryl-CoA from L-lysine: step 6/6. Functionally, E2 component of the 2-oxoglutarate dehydrogenase (OGDH) complex which catalyzes the second step in the conversion of 2-oxoglutarate to succinyl-CoA and CO(2). This Bacillus subtilis (strain 168) protein is Dihydrolipoyllysine-residue succinyltransferase component of 2-oxoglutarate dehydrogenase complex (odhB).